Consider the following 1472-residue polypeptide: MLVMGRDHKLYYEAYNDASDLDGDGVLDVGYKPDKITYYGYYNSNVCYRANGTMFQAMSVANGSNGKKCTGAWSGDFLNYLTTSRMDALRKVLFGGYREVDTLTQTILRASYTPQDAHSWGKEYASVSHDGYDISDYAPLSAPGSGHYHLFAVTTLSDNGIPQLRVLADTTFRVWNWVSIERPVAGSDCFTPENKRVSCVSGGSRGISDYPLRVEVCSVADELRESNCKLYQNNTSYKPTGILHDYGENDRMYFGLLTGSYQKNITGGVLHSNVSNFSREINPLTGQFCLNGNCGGGGDVKGIVHTISSFRMLDFNYKDYTYGCGWIATRPVKEGECWMWGNPVAEMMYETLRYFGGATAPRPEYDINSSSQDIATLQLSHPGWKPPYTSVDKGGSGYSVCAQPTMTVFSDINPSYDDKLPGSHWSNFSGSGDPASMRNLDVSAEADRIWEAEGGGSKLFFIGESNNNSDNAPTPKVVSNLSTVRGLSPEEPSKGGTYYSAAVARYGANHKMGGSKFVRTYAVALASPLPKFEFPVGNARVSLVPFAKSVRGFGISATGNFQPTNQIIDFYVQRVANMAGSSGADYDATINGGRPYAEFRINYEDVEQGADHDMDAIALYTIYVNAKNQLVVTLKSEYSAGSIDQHMGYVISGTTRDGVYLEICDLADGHSNDGTRSSCAGQQPYKLNTPPNRLPGYCNATPMPGDCNGLPPVATRIFSVASQGANAVLLKDPLWYAAKYGHDQGVILNSSGGLANYFPVNNALYLRQQVAKAFSAIQSQAGSSGSIAVVGASVSSTSFAVIPSYSSTHDGKDWTGEMTAYRIDANGMIGDVLWLASAGVPSGTSAIAKRVIYTALSHVDDTNRASVVRRFVAEKLVDSSSGDVATDAAQVFGRLGYTPRGVIDDFGSSVTPNQLVNYLRGDKRMEGATLNTAPFRRRFGPLGDMINSIPVVATRRANYGWATASGLPQVQRDSYSAFINARQNSTAAEHIFVGANDGMLHAFDDKGTERFAYVPNGVLHHLGFLANPEYQHHYYVDGKSTLSDAYLDGSWRSVLVGGTGAGGRSMFALDVTSPSTFNESNVLWEMNSENDDDMGYTMGKPYIVPLQNGSWAAIFGNGYNSTNGRAVLFIVNLATGQLIRKIEARDGIDPDGSDPANMGYNGLGNLAVLDTDGDGLVDMVYGADLHGNLWKFNLSGKDPQRWGIAYKDGLGNPIPLFVARNPQGYRQPITGGLEVAVGPSAGYIIYFGSGRYFAANDNNSKDLSTLYGIWDSGSPVIAGRAALSAQIIQASDHPTSPDTRIVTRRPLSYLSKHGWYVDLVVQGQDPQGERSIATPLLQGGRVFFSTYVPGVSVNCASGGSNWLYVLDAASGGAALGQVNIPSRGSRSSIGNSDTGAVSTGGDAPIQSVAMTRTAPRQPVFCNPGEQGCPLVPETHAAPLDTRCSEVIIDPNDPTRSISLFRACGRQSWRQLR.

Asp1170, Asp1172, Asp1174, Leu1176, and Asp1178 together coordinate Ca(2+). Over residues 1383-1397 the composition is skewed to polar residues; the sequence is RGSRSSIGNSDTGAV. The segment at 1383–1403 is disordered; the sequence is RGSRSSIGNSDTGAVSTGGDA.

It belongs to the PilY1 family.

The protein resides in the fimbrium. Its function is as follows. One of the three PilY1 homologs of X.fastidiosa, which are involved in bacterial twitching motility as component of the filamentous type IV pili (T4P). The twitching motility of this protein is enhanced by calcium, which may provide the bacterium an adaptive advantage in environments with high calcium concentrations. This Xylella fastidiosa (strain Temecula1 / ATCC 700964) protein is Type IV pilus biogenesis factor PilY1 homolog PD_1611.